The sequence spans 542 residues: POTE ankyrin domain family member C (542 aa).

ANK repeat units follow at residues 138 to 171, 172 to 201, 205 to 234, 238 to 267, 271 to 300, 304 to 333, and 337 to 373; these read EDLD…KRDK, QKRT…QLNV, KKRT…DQNI, YGNT…DIES, CGLT…NLNA, YGRT…DVSS, and SGQT…SENS. The segment at 369–494 is disordered; the sequence is SSENSNPEQD…NTGISQDEIL (126 aa). Composition is skewed to basic and acidic residues over residues 377-392, 401-412, and 466-481; these read QDLK…RLKV, MSQEPEINKDCD, and EEYH…KQLS. Over residues 482–494 the composition is skewed to polar residues; it reads EEQNTGISQDEIL. A coiled-coil region spans residues 489-538; sequence SQDEILTNKQKQIEVAEKKMNSELSLSHKKEEDLLRENSMLQEEIAMLIS.

Belongs to the POTE family. In terms of tissue distribution, expressed in prostate and testis.

The sequence is that of POTE ankyrin domain family member C (POTEC) from Homo sapiens (Human).